A 306-amino-acid polypeptide reads, in one-letter code: Follistatin-related protein 1 (306 aa).

Positions 1–18 are cleaved as a signal peptide; that stretch reads MWKRWLALSLVTIALVHG. The 24-residue stretch at 28 to 51 folds into the Follistatin-like domain; sequence ICANVFCGAGRECAVTEKGEPTCL. 5 cysteine pairs are disulfide-bonded: Cys-29/Cys-40, Cys-34/Cys-50, Cys-52/Cys-82, Cys-56/Cys-75, and Cys-64/Cys-96. Residues 46–98 enclose the Kazal-like domain; sequence GEPTCLCIEQCKPHKRPVCGSNGKTYLNHCELHRDACLTGSKIQVDYDGHCKE. Residue Asn-142 is glycosylated (N-linked (GlcNAc...) asparagine). Residues 142–176 form the EF-hand 1 domain; it reads NYSEILDKYFKSFDNGDSHLDSSEFLKFVEQNETA. Ser-163 carries the post-translational modification Phosphoserine. Asn-173 and Asn-178 each carry an N-linked (GlcNAc...) asparagine glycan. The EF-hand 2 domain occupies 191-226; the sequence is LRSLCVDALIELSDENADWKLSFQEFLKCLNPSFNP. Positions 231 to 285 constitute a VWFC domain; that stretch reads CALEDETYADGAETEVDCNRCVCSCGHWVCTAMTCDGKNQKGVQTHTEEEKTGYV.

In terms of assembly, homodimer. Interacts with SCN10A. Interacts with DIP2A; DIP2A may act as a cell surface receptor for FSTL1. Interacts with BMP4. Interacts with CD14; this interaction promotes TL4-mediated signaling cascade. As to expression, during central nervous system development, strongly expressed in the telencephalon, diencephalon, brainstem, limbic system and spinal cord. Widely expressed in all organs.

The protein resides in the secreted. Functionally, secreted glycoprotein that is involved in various physiological processes, such as angiogenesis, regulation of the immune response, cell proliferation and differentiation. Plays a role in the development of the central nervous system, skeletal system, lungs, and ureter. Promotes endothelial cell survival, migration and differentiation into network structures in an AKT-dependent manner. Also promotes survival of cardiac myocytes. Initiates various signaling cascades by activating different receptors on the cell surface such as DIP2A, TLR4 or BMP receptors. The sequence is that of Follistatin-related protein 1 (Fstl1) from Mus musculus (Mouse).